The following is a 145-amino-acid chain: MDSNKDERAYAQWVIIILHNVGSSPFKIANLGLSWGKLYADGNKDKEVYPSDYNGKTVGPDEKIQINSCGRENASSGTEGSFDIVDPNDGNKTIRHFYWECPWGSKRNTWTPSGSNTKWMVEWSGQNLDSGALGTITVDVLRKGN.

The propeptide occupies 1–8 (MDSNKDER).

This sequence belongs to the aegerolysin family.

This is Aegerolysin Aa-Pri1 (AA-PRI1) from Cyclocybe aegerita (Black poplar mushroom).